We begin with the raw amino-acid sequence, 174 residues long: Type II restriction enzyme Bsp6I (174 aa).

It catalyses the reaction Endonucleolytic cleavage of DNA to give specific double-stranded fragments with terminal 5'-phosphates.. Functionally, a P subtype restriction enzyme that recognizes the double-stranded sequence 5'-GCNGC-3' and cleaves after C-2. The chain is Type II restriction enzyme Bsp6I from Bacillus sp. (strain RFL6).